A 239-amino-acid polypeptide reads, in one-letter code: UPF0173 metal-dependent hydrolase Dvul_0081 (239 aa).

This sequence belongs to the UPF0173 family.

The protein is UPF0173 metal-dependent hydrolase Dvul_0081 of Nitratidesulfovibrio vulgaris (strain DP4) (Desulfovibrio vulgaris).